Here is a 922-residue protein sequence, read N- to C-terminus: MEGHGAQRSSPLARDLTRAFTSYNKHTVLLKKNLKETHAFFREMRQNYSNTCASSTLSSDSSSQETGQFSCISFPSHEEEFLRNTVGAAPYILVLGQDCAARYQLLNCLLGDRLLPLGPEAGQACHGGQGNVCKRRKLCFTHGRQTRLSLALPGQYELVHQLAANCGRWETVPREDLEILDECEDPAHRQAELEITLHHPLLQEAKVMVVPCPSVQPIEEALEDCTRSVIPIILYAVNRDSLSSEQVADLRKVKEILSFPVCYVRLPDASAASAELGQRCEKDKSKLQKQLLSRGLLGSLSGNCSCGAPAQTAAPGAKPQSVVGENFEKLHRILVPFTRQVLQNQQVEAASLLNGLHCRCLDLFINQAFDMQRDLQITPRRLEYTREKEGELFTSLMTIANRKQEEMKDMIVETLGSMKEQLLEDAANLEFTDIIVTTNGDPVTSKEIKSCIQQIQDLIVVRLNQAVANKLISSVDYLRESFVGTLERCLSSLEKSHIESSVHNITSNHLKQLLNAAYHVEVTFHSGSSVTRLFWEQIKQIIHRITFVNPPAITPEWKRKVAQDAIESLSAAKLARSICSQFRTRLYSSHEAFAASLRQLEERHTGRLERTEDLWLRVRKDHAPRLARLSLESRSLRDVVLHGKPKLGRELGRGQYGVVYLCDSWGGHNPCALKSVVPPDDKHWNDLALEFHYTRTLPKHERLVDLHGSVIDHTYAGGSSIAVLLIMERLHRDLYTGLKAGLSLQERLQIALDVVEGIRFLHSQGLLHRDIKLKNVLLDKQNRAKITDLGFCKPEAMMSGSIVGTPIHMAPELFTGKYDNSVDVYAFGILFWYLCAGSVKLPEAFEKCSSKDQLWNNVRKGARPERLPCFDEECWQLMEACWNGDPSQRPLLGIVEPSLESITVRMCNCGSEQKSSSLEDSC.

A Protein kinase domain is found at 645–899 (PKLGRELGRG…PLLGIVEPSL (255 aa)). Residues 651 to 659 (LGRGQYGVV) and Lys674 contribute to the ATP site. The active-site Proton acceptor is Asp770.

This sequence belongs to the protein kinase superfamily. Ser/Thr protein kinase family.

The protein resides in the cytoplasm. It localises to the cell membrane. Its subcellular location is the apical cell membrane. It is found in the basolateral cell membrane. The protein localises to the cell junction. It carries out the reaction L-seryl-[protein] + ATP = O-phospho-L-seryl-[protein] + ADP + H(+). It catalyses the reaction L-threonyl-[protein] + ATP = O-phospho-L-threonyl-[protein] + ADP + H(+). The catalysed reaction is L-tyrosyl-[protein] + ATP = O-phospho-L-tyrosyl-[protein] + ADP + H(+). May act as a positive regulator of ERK phosphorylation downstream of fibroblast growth factor-receptor activation. May induce both caspase-dependent apoptosis and caspase-independent cell death. May play a role in the embryonic development. In Tetraodon nigroviridis (Spotted green pufferfish), this protein is Dual serine/threonine and tyrosine protein kinase.